The following is a 446-amino-acid chain: D-inositol 3-phosphate glycosyltransferase (446 aa).

Position 19 (H19) interacts with 1D-myo-inositol 3-phosphate. UDP-N-acetyl-alpha-D-glucosamine contacts are provided by residues Q25–P26 and G33. 1D-myo-inositol 3-phosphate-binding positions include D30 to N35, K88, Y121, T145, and R165. Residues R239, K244, and Q303 each contribute to the UDP-N-acetyl-alpha-D-glucosamine site. Mg(2+) contacts are provided by Y312, R313, and S315. E325 and E333 together coordinate UDP-N-acetyl-alpha-D-glucosamine. Mg(2+) is bound at residue T339.

It belongs to the glycosyltransferase group 1 family. MshA subfamily. As to quaternary structure, homodimer.

The enzyme catalyses 1D-myo-inositol 3-phosphate + UDP-N-acetyl-alpha-D-glucosamine = 1D-myo-inositol 2-acetamido-2-deoxy-alpha-D-glucopyranoside 3-phosphate + UDP + H(+). Its function is as follows. Catalyzes the transfer of a N-acetyl-glucosamine moiety to 1D-myo-inositol 3-phosphate to produce 1D-myo-inositol 2-acetamido-2-deoxy-glucopyranoside 3-phosphate in the mycothiol biosynthesis pathway. This is D-inositol 3-phosphate glycosyltransferase from Rhodococcus opacus (strain B4).